A 337-amino-acid chain; its full sequence is Inositol 2-dehydrogenase (337 aa).

This sequence belongs to the Gfo/Idh/MocA family. Homotetramer.

It carries out the reaction myo-inositol + NAD(+) = scyllo-inosose + NADH + H(+). Involved in the oxidation of myo-inositol (MI) to 2-keto-myo-inositol (2KMI or 2-inosose). This Burkholderia lata (strain ATCC 17760 / DSM 23089 / LMG 22485 / NCIMB 9086 / R18194 / 383) protein is Inositol 2-dehydrogenase.